A 212-amino-acid polypeptide reads, in one-letter code: Ropporin-1 (212 aa).

The region spanning 12–43 (PELPELLKQFTKDAIRTQPPDLIQWAAEYFGA) is the RIIa domain. Ser-56 bears the Phosphoserine mark. Residues 209–212 (VRLE) form an interaction with RHPN1 region.

Belongs to the ropporin family. Homodimer. Interacts with AKAP3. May interact with SPA17. Interacts with RHPN1. Interacts with FSCB; the interaction increases upon spermatozoa capacitation conditions. Interacts with CFAP61. Sumoylated, sumoylation decreases upon spermatozoa capacitation conditions. As to expression, testis-specific. Present in the most inner parts of seminiferous tubules (at protein level).

The protein resides in the cell projection. Its subcellular location is the cilium. It is found in the flagellum. In terms of biological role, important for male fertility. With ROPN1L, involved in fibrous sheath integrity and sperm motility, plays a role in PKA-dependent signaling processes required for spermatozoa capacitation. The sequence is that of Ropporin-1 (Ropn1) from Mus musculus (Mouse).